Here is a 396-residue protein sequence, read N- to C-terminus: MAALDTFLFTSESVNEGHPDKLCDQVSDAVLDACLAEDPDSKVACETCTKTNMVMVFGEITTKANVDYEKIVRETCRNIGFVSADVGLDADHCKVLVNIEQQSPDIAQGVHGHFTKRPEEIGAGDQGHMFGYATDETPELMPLSHVLATKLGARLTEVRKNGTCAWLRPDGKTQVTVEYRNESGARVPVRVHTVLISTQHDETVTNDEIAADLKEHVIKPVIPEQYLDEKTIFHLNPSGRFVIGGPHGDAGLTGRKIIIDTYGGWGAHGGGAFSGKDPTKVDRSGAYVARQAAKSIVASGLARRCIVQVSYAIGVPEPLSVFVDTYGTGRIPDKEILKIVKENFDFRPGMIIINLDLKKGGNGRYLKTAAYGHFGRDDPDFTWEVVKPLKWEKPSA.

Glu12 serves as a coordination point for Mg(2+). His18 contacts ATP. Glu46 contributes to the K(+) binding site. L-methionine-binding residues include Glu59 and Gln102. Residues 170-172 (DGK), 238-241 (SGRF), Asp249, 255-256 (RK), Ala272, Lys276, and Lys280 contribute to the ATP site. Residue Asp249 coordinates L-methionine. Lys280 provides a ligand contact to L-methionine.

The protein belongs to the AdoMet synthase family. As to quaternary structure, homotetramer. Mn(2+) serves as cofactor. Mg(2+) is required as a cofactor. It depends on Co(2+) as a cofactor. The cofactor is K(+).

Its subcellular location is the cytoplasm. The catalysed reaction is L-methionine + ATP + H2O = S-adenosyl-L-methionine + phosphate + diphosphate. Its pathway is amino-acid biosynthesis; S-adenosyl-L-methionine biosynthesis; S-adenosyl-L-methionine from L-methionine: step 1/1. In terms of biological role, catalyzes the formation of S-adenosylmethionine from methionine and ATP. The reaction comprises two steps that are both catalyzed by the same enzyme: formation of S-adenosylmethionine (AdoMet) and triphosphate, and subsequent hydrolysis of the triphosphate. The protein is S-adenosylmethionine synthase 1 (SAM1) of Oryza sativa subsp. japonica (Rice).